The following is a 364-amino-acid chain: Phosphoserine aminotransferase (364 aa).

Residue arginine 46 coordinates L-glutamate. Pyridoxal 5'-phosphate contacts are provided by residues 80–81 (AR), tryptophan 106, threonine 157, aspartate 176, and glutamine 199. Lysine 200 is modified (N6-(pyridoxal phosphate)lysine). Pyridoxal 5'-phosphate is bound at residue 241–242 (NT).

The protein belongs to the class-V pyridoxal-phosphate-dependent aminotransferase family. SerC subfamily. Homodimer. Pyridoxal 5'-phosphate is required as a cofactor.

It localises to the cytoplasm. It carries out the reaction O-phospho-L-serine + 2-oxoglutarate = 3-phosphooxypyruvate + L-glutamate. The enzyme catalyses 4-(phosphooxy)-L-threonine + 2-oxoglutarate = (R)-3-hydroxy-2-oxo-4-phosphooxybutanoate + L-glutamate. It functions in the pathway amino-acid biosynthesis; L-serine biosynthesis; L-serine from 3-phospho-D-glycerate: step 2/3. Its pathway is cofactor biosynthesis; pyridoxine 5'-phosphate biosynthesis; pyridoxine 5'-phosphate from D-erythrose 4-phosphate: step 3/5. In terms of biological role, catalyzes the reversible conversion of 3-phosphohydroxypyruvate to phosphoserine and of 3-hydroxy-2-oxo-4-phosphonooxybutanoate to phosphohydroxythreonine. In Vibrio vulnificus (strain CMCP6), this protein is Phosphoserine aminotransferase.